The following is a 361-amino-acid chain: tRNA-specific 2-thiouridylase MnmA (361 aa).

Residues 11-18 (GMSGGVDS) and methionine 37 contribute to the ATP site. An interaction with target base in tRNA region spans residues 97-99 (NPD). The Nucleophile role is filled by cysteine 102. Residues cysteine 102 and cysteine 199 are joined by a disulfide bond. Glycine 126 lines the ATP pocket. The interaction with tRNA stretch occupies residues 149 to 151 (KDQ). Residue cysteine 199 is the Cysteine persulfide intermediate of the active site. The tract at residues 311 to 312 (RY) is interaction with tRNA.

It belongs to the MnmA/TRMU family.

The protein localises to the cytoplasm. It carries out the reaction S-sulfanyl-L-cysteinyl-[protein] + uridine(34) in tRNA + AH2 + ATP = 2-thiouridine(34) in tRNA + L-cysteinyl-[protein] + A + AMP + diphosphate + H(+). Functionally, catalyzes the 2-thiolation of uridine at the wobble position (U34) of tRNA, leading to the formation of s(2)U34. The polypeptide is tRNA-specific 2-thiouridylase MnmA (Cupriavidus necator (strain ATCC 17699 / DSM 428 / KCTC 22496 / NCIMB 10442 / H16 / Stanier 337) (Ralstonia eutropha)).